The sequence spans 145 residues: Flagellar assembly factor FliW (145 aa).

It belongs to the FliW family. Interacts with translational regulator CsrA and flagellin(s).

Its subcellular location is the cytoplasm. Functionally, acts as an anti-CsrA protein, binds CsrA and prevents it from repressing translation of its target genes, one of which is flagellin. Binds to flagellin and participates in the assembly of the flagellum. The sequence is that of Flagellar assembly factor FliW from Thermosipho africanus (strain TCF52B).